A 531-amino-acid chain; its full sequence is Flavin-containing monooxygenase 3 (531 aa).

Residues 9 to 13 (GAGVS), Glu32, 40 to 41 (LW), and 61 to 62 (NS) contribute to the FAD site. Residues 60 to 61 (TN) and 195 to 198 (SGCD) each bind NADP(+). Ser401 carries the phosphoserine modification. A helical membrane pass occupies residues 511–531 (YSHFLRLLAVPVLIALFLVLI).

This sequence belongs to the FMO family. FAD is required as a cofactor. As to expression, detected in liver and kidney (at protein level). Expressed in kidney and liver. Weakly expressed in lung. Does not seem to be expressed in brain, adipose tissue, or muscle.

The protein localises to the microsome membrane. The protein resides in the endoplasmic reticulum membrane. The enzyme catalyses trimethylamine + NADPH + O2 = trimethylamine N-oxide + NADP(+) + H2O. It catalyses the reaction N,N-dimethylaniline + NADPH + O2 + H(+) = N,N-dimethylaniline N-oxide + NADP(+) + H2O. The catalysed reaction is hypotaurine + NADPH + O2 + H(+) = taurine + NADP(+) + H2O. It carries out the reaction (S)-nicotine + NADPH + O2 = trans-(S)-nicotine N(1')-oxide + NADP(+) + H2O. The enzyme catalyses albendazole + NADPH + O2 + H(+) = albendazole S-oxide + NADP(+) + H2O. Essential hepatic enzyme that catalyzes the oxygenation of a wide variety of nitrogen- and sulfur-containing compounds including drugs as well as dietary compounds. Plays an important role in the metabolism of trimethylamine (TMA), via the production of trimethylamine N-oxide (TMAO) metabolite. TMA is generated by the action of gut microbiota using dietary precursors such as choline, choline containing compounds, betaine or L-carnitine. By regulating TMAO concentration, FMO3 directly impacts both platelet responsiveness and rate of thrombus formation. The chain is Flavin-containing monooxygenase 3 (Fmo3) from Rattus norvegicus (Rat).